The sequence spans 95 residues: Integration host factor subunit beta (95 aa).

Belongs to the bacterial histone-like protein family. As to quaternary structure, heterodimer of an alpha and a beta chain.

This protein is one of the two subunits of integration host factor, a specific DNA-binding protein that functions in genetic recombination as well as in transcriptional and translational control. This Shewanella sp. (strain ANA-3) protein is Integration host factor subunit beta.